The following is a 300-amino-acid chain: NADH-cytochrome b5 reductase 2 (300 aa).

A helical membrane pass occupies residues 12-29; that stretch reads FVYPLVGATIGSIGLAYY. The 105-residue stretch at 49-153 folds into the FAD-binding FR-type domain; the sequence is DQWIDLKLKK…KGPVVKWKWE (105 aa). Residue 156 to 191 participates in FAD binding; it reads QFKSIALIGGGTGITPLYQLLREITSNPEDKTKVSL.

It belongs to the flavoprotein pyridine nucleotide cytochrome reductase family. FAD serves as cofactor.

Its subcellular location is the mitochondrion outer membrane. It carries out the reaction 2 Fe(III)-[cytochrome b5] + NADH = 2 Fe(II)-[cytochrome b5] + NAD(+) + H(+). May mediate the reduction of outer membrane cytochrome b5. This is NADH-cytochrome b5 reductase 2 (MCR1) from Lodderomyces elongisporus (strain ATCC 11503 / CBS 2605 / JCM 1781 / NBRC 1676 / NRRL YB-4239) (Yeast).